A 274-amino-acid polypeptide reads, in one-letter code: NADPH-dependent 7-cyano-7-deazaguanine reductase (274 aa).

80 to 82 (VES) is a substrate binding site. 82–83 (SK) lines the NADPH pocket. The active-site Thioimide intermediate is the cysteine 181. Aspartate 188 serves as the catalytic Proton donor. 220 to 221 (HE) provides a ligand contact to substrate. Residue 249-250 (RG) participates in NADPH binding.

This sequence belongs to the GTP cyclohydrolase I family. QueF type 2 subfamily. As to quaternary structure, homodimer.

Its subcellular location is the cytoplasm. It carries out the reaction 7-aminomethyl-7-carbaguanine + 2 NADP(+) = 7-cyano-7-deazaguanine + 2 NADPH + 3 H(+). It participates in tRNA modification; tRNA-queuosine biosynthesis. Functionally, catalyzes the NADPH-dependent reduction of 7-cyano-7-deazaguanine (preQ0) to 7-aminomethyl-7-deazaguanine (preQ1). This chain is NADPH-dependent 7-cyano-7-deazaguanine reductase, found in Burkholderia multivorans (strain ATCC 17616 / 249).